An 874-amino-acid polypeptide reads, in one-letter code: Alanine--tRNA ligase (874 aa).

Zn(2+)-binding residues include H562, H566, C665, and H669.

It belongs to the class-II aminoacyl-tRNA synthetase family. It depends on Zn(2+) as a cofactor.

The protein resides in the cytoplasm. The enzyme catalyses tRNA(Ala) + L-alanine + ATP = L-alanyl-tRNA(Ala) + AMP + diphosphate. Functionally, catalyzes the attachment of alanine to tRNA(Ala) in a two-step reaction: alanine is first activated by ATP to form Ala-AMP and then transferred to the acceptor end of tRNA(Ala). Also edits incorrectly charged Ser-tRNA(Ala) and Gly-tRNA(Ala) via its editing domain. This is Alanine--tRNA ligase from Pseudomonas putida (strain W619).